Reading from the N-terminus, the 308-residue chain is N-acetylmuramic acid 6-phosphate etherase (308 aa).

One can recognise an SIS domain in the interval 63–226 (IVDAFACGGR…STASMIRSGK (164 aa)). The active-site Proton donor is E91. E122 is an active-site residue.

It belongs to the GCKR-like family. MurNAc-6-P etherase subfamily. Homodimer.

The catalysed reaction is N-acetyl-D-muramate 6-phosphate + H2O = N-acetyl-D-glucosamine 6-phosphate + (R)-lactate. It functions in the pathway amino-sugar metabolism; 1,6-anhydro-N-acetylmuramate degradation. It participates in amino-sugar metabolism; N-acetylmuramate degradation. Its pathway is cell wall biogenesis; peptidoglycan recycling. In terms of biological role, specifically catalyzes the cleavage of the D-lactyl ether substituent of MurNAc 6-phosphate, producing GlcNAc 6-phosphate and D-lactate. Together with AnmK, is also required for the utilization of anhydro-N-acetylmuramic acid (anhMurNAc) either imported from the medium or derived from its own cell wall murein, and thus plays a role in cell wall recycling. The sequence is that of N-acetylmuramic acid 6-phosphate etherase from Colwellia psychrerythraea (strain 34H / ATCC BAA-681) (Vibrio psychroerythus).